The sequence spans 182 residues: ATP synthase subunit b (182 aa).

The helical transmembrane segment at 25–45 threads the bilayer; it reads VVLAGFAVLFYIVVKFVVPMF.

Belongs to the ATPase B chain family. As to quaternary structure, F-type ATPases have 2 components, F(1) - the catalytic core - and F(0) - the membrane proton channel. F(1) has five subunits: alpha(3), beta(3), gamma(1), delta(1), epsilon(1). F(0) has three main subunits: a(1), b(2) and c(10-14). The alpha and beta chains form an alternating ring which encloses part of the gamma chain. F(1) is attached to F(0) by a central stalk formed by the gamma and epsilon chains, while a peripheral stalk is formed by the delta and b chains.

The protein localises to the cell membrane. In terms of biological role, f(1)F(0) ATP synthase produces ATP from ADP in the presence of a proton or sodium gradient. F-type ATPases consist of two structural domains, F(1) containing the extramembraneous catalytic core and F(0) containing the membrane proton channel, linked together by a central stalk and a peripheral stalk. During catalysis, ATP synthesis in the catalytic domain of F(1) is coupled via a rotary mechanism of the central stalk subunits to proton translocation. Component of the F(0) channel, it forms part of the peripheral stalk, linking F(1) to F(0). The protein is ATP synthase subunit b of Arthrobacter sp. (strain FB24).